The following is a 360-amino-acid chain: Phospho-N-acetylmuramoyl-pentapeptide-transferase (360 aa).

10 helical membrane-spanning segments follow: residues 26 to 46 (TILG…AVIQ), 73 to 93 (TMGG…WADL), 98 to 118 (VWVV…DDAL), 136 to 156 (LQVL…TDPV), 168 to 188 (WVFP…VGSS), 199 to 219 (GLAI…AYAS), 235 to 255 (GVGE…GFLW), 263 to 283 (VFMG…VAVA), 288 to 308 (IVLF…MIQV), and 338 to 358 (VIVR…AMLK).

The protein belongs to the glycosyltransferase 4 family. MraY subfamily. Requires Mg(2+) as cofactor.

The protein resides in the cell inner membrane. The catalysed reaction is UDP-N-acetyl-alpha-D-muramoyl-L-alanyl-gamma-D-glutamyl-meso-2,6-diaminopimeloyl-D-alanyl-D-alanine + di-trans,octa-cis-undecaprenyl phosphate = di-trans,octa-cis-undecaprenyl diphospho-N-acetyl-alpha-D-muramoyl-L-alanyl-D-glutamyl-meso-2,6-diaminopimeloyl-D-alanyl-D-alanine + UMP. Its pathway is cell wall biogenesis; peptidoglycan biosynthesis. Functionally, catalyzes the initial step of the lipid cycle reactions in the biosynthesis of the cell wall peptidoglycan: transfers peptidoglycan precursor phospho-MurNAc-pentapeptide from UDP-MurNAc-pentapeptide onto the lipid carrier undecaprenyl phosphate, yielding undecaprenyl-pyrophosphoryl-MurNAc-pentapeptide, known as lipid I. The protein is Phospho-N-acetylmuramoyl-pentapeptide-transferase of Halorhodospira halophila (strain DSM 244 / SL1) (Ectothiorhodospira halophila (strain DSM 244 / SL1)).